Consider the following 556-residue polypeptide: Adenine deaminase (556 aa).

The protein belongs to the metallo-dependent hydrolases superfamily. Adenine deaminase family. It depends on Mn(2+) as a cofactor.

It catalyses the reaction adenine + H2O + H(+) = hypoxanthine + NH4(+). This is Adenine deaminase from Archaeoglobus fulgidus (strain ATCC 49558 / DSM 4304 / JCM 9628 / NBRC 100126 / VC-16).